The following is a 163-amino-acid chain: Large ribosomal subunit protein uL15 (163 aa).

Residues 1–29 (MSKKRRQRGSRTHGGGSHKNRRGAGHRGG) are compositionally biased toward basic residues. Disordered stretches follow at residues 1-59 (MSKK…KTRR) and 135-163 (VADGEAVLSERGEELEAEKDSTDEEDEES). Composition is skewed to basic and acidic residues over residues 33-46 (AGRDKHEFHNHEPL) and 142-154 (LSERGEELEAEKD).

This sequence belongs to the universal ribosomal protein uL15 family. Part of the 50S ribosomal subunit.

Binds to the 23S rRNA. In Natronomonas pharaonis (strain ATCC 35678 / DSM 2160 / CIP 103997 / JCM 8858 / NBRC 14720 / NCIMB 2260 / Gabara) (Halobacterium pharaonis), this protein is Large ribosomal subunit protein uL15.